The following is a 388-amino-acid chain: Succinate--CoA ligase [ADP-forming] subunit beta (388 aa).

The region spanning 9-244 (KQLFREYGLP…TTQDDEREMH (236 aa)) is the ATP-grasp domain. Residues lysine 46, 53 to 55 (GRG), glutamate 99, serine 102, and glutamate 107 contribute to the ATP site. Residues asparagine 199 and aspartate 213 each contribute to the Mg(2+) site. Residues asparagine 264 and 321-323 (GIV) each bind substrate.

This sequence belongs to the succinate/malate CoA ligase beta subunit family. Heterotetramer of two alpha and two beta subunits. It depends on Mg(2+) as a cofactor.

The enzyme catalyses succinate + ATP + CoA = succinyl-CoA + ADP + phosphate. It carries out the reaction GTP + succinate + CoA = succinyl-CoA + GDP + phosphate. It functions in the pathway carbohydrate metabolism; tricarboxylic acid cycle; succinate from succinyl-CoA (ligase route): step 1/1. Its function is as follows. Succinyl-CoA synthetase functions in the citric acid cycle (TCA), coupling the hydrolysis of succinyl-CoA to the synthesis of either ATP or GTP and thus represents the only step of substrate-level phosphorylation in the TCA. The beta subunit provides nucleotide specificity of the enzyme and binds the substrate succinate, while the binding sites for coenzyme A and phosphate are found in the alpha subunit. The protein is Succinate--CoA ligase [ADP-forming] subunit beta of Psychromonas ingrahamii (strain DSM 17664 / CCUG 51855 / 37).